We begin with the raw amino-acid sequence, 491 residues long: Glutamyl-tRNA(Gln) amidotransferase subunit A (491 aa).

Residues K78 and S158 each act as charge relay system in the active site. Catalysis depends on S182, which acts as the Acyl-ester intermediate.

Belongs to the amidase family. GatA subfamily. As to quaternary structure, heterotrimer of A, B and C subunits.

The enzyme catalyses L-glutamyl-tRNA(Gln) + L-glutamine + ATP + H2O = L-glutaminyl-tRNA(Gln) + L-glutamate + ADP + phosphate + H(+). Allows the formation of correctly charged Gln-tRNA(Gln) through the transamidation of misacylated Glu-tRNA(Gln) in organisms which lack glutaminyl-tRNA synthetase. The reaction takes place in the presence of glutamine and ATP through an activated gamma-phospho-Glu-tRNA(Gln). This Nitrobacter winogradskyi (strain ATCC 25391 / DSM 10237 / CIP 104748 / NCIMB 11846 / Nb-255) protein is Glutamyl-tRNA(Gln) amidotransferase subunit A.